A 489-amino-acid polypeptide reads, in one-letter code: Glutamyl-tRNA(Gln) amidotransferase subunit A (489 aa).

Catalysis depends on charge relay system residues Lys80 and Ser160. The active-site Acyl-ester intermediate is Ser184.

The protein belongs to the amidase family. GatA subfamily. Heterotrimer of A, B and C subunits.

It catalyses the reaction L-glutamyl-tRNA(Gln) + L-glutamine + ATP + H2O = L-glutaminyl-tRNA(Gln) + L-glutamate + ADP + phosphate + H(+). Allows the formation of correctly charged Gln-tRNA(Gln) through the transamidation of misacylated Glu-tRNA(Gln) in organisms which lack glutaminyl-tRNA synthetase. The reaction takes place in the presence of glutamine and ATP through an activated gamma-phospho-Glu-tRNA(Gln). The polypeptide is Glutamyl-tRNA(Gln) amidotransferase subunit A (Wolbachia sp. subsp. Drosophila simulans (strain wRi)).